Consider the following 265-residue polypeptide: 4-hydroxy-tetrahydrodipicolinate reductase (265 aa).

9–14 (GPRGRM) is a binding site for NAD(+). NADP(+) is bound at residue arginine 37. Residues 98–100 (GTT) and 124–127 (APNF) contribute to the NAD(+) site. Histidine 154 serves as the catalytic Proton donor/acceptor. Histidine 155 is a (S)-2,3,4,5-tetrahydrodipicolinate binding site. The active-site Proton donor is the lysine 158. 164–165 (GT) contacts (S)-2,3,4,5-tetrahydrodipicolinate.

It belongs to the DapB family.

The protein localises to the cytoplasm. The enzyme catalyses (S)-2,3,4,5-tetrahydrodipicolinate + NAD(+) + H2O = (2S,4S)-4-hydroxy-2,3,4,5-tetrahydrodipicolinate + NADH + H(+). The catalysed reaction is (S)-2,3,4,5-tetrahydrodipicolinate + NADP(+) + H2O = (2S,4S)-4-hydroxy-2,3,4,5-tetrahydrodipicolinate + NADPH + H(+). The protein operates within amino-acid biosynthesis; L-lysine biosynthesis via DAP pathway; (S)-tetrahydrodipicolinate from L-aspartate: step 4/4. Its function is as follows. Catalyzes the conversion of 4-hydroxy-tetrahydrodipicolinate (HTPA) to tetrahydrodipicolinate. This chain is 4-hydroxy-tetrahydrodipicolinate reductase, found in Geobacillus kaustophilus (strain HTA426).